The following is a 445-amino-acid chain: CBL-interacting serine/threonine-protein kinase 5 (445 aa).

The region spanning 12 to 267 is the Protein kinase domain; the sequence is YEMGRLLGKG…IPAIMRTPWL (256 aa). ATP contacts are provided by residues 18 to 26 and Lys-41; that span reads LGKGTFAKV. Residue Asp-135 is the Proton acceptor of the active site. Residues 153–182 are activation loop; that stretch reads DFGLSALPEQILQDGLLHTQCGTPAYVAPE. Ser-157 carries the post-translational modification Phosphoserine. Phosphothreonine is present on Thr-171. The NAF domain maps to 307 to 332; sequence ISPKFFNAFEFISSMSSGFDLSSLFE. The interval 336-366 is PPI; it reads KVQSVFTSRSSATEVMEKIETVTKEMNMKVK.

The protein belongs to the protein kinase superfamily. CAMK Ser/Thr protein kinase family. SNF1 subfamily. Requires Mn(2+) as cofactor.

The enzyme catalyses L-seryl-[protein] + ATP = O-phospho-L-seryl-[protein] + ADP + H(+). The catalysed reaction is L-threonyl-[protein] + ATP = O-phospho-L-threonyl-[protein] + ADP + H(+). In terms of biological role, CIPK serine-threonine protein kinases interact with CBL proteins. Binding of a CBL protein to the regulatory NAF domain of CIPK protein lead to the activation of the kinase in a calcium-dependent manner. This is CBL-interacting serine/threonine-protein kinase 5 (CIPK5) from Arabidopsis thaliana (Mouse-ear cress).